The chain runs to 206 residues: Fibroblast growth factor 4 (206 aa).

The first 29 residues, methionine 1–alanine 29, serve as a signal peptide directing secretion.

It belongs to the heparin-binding growth factors family. Interacts with FGFR1, FGFR2, FGFR3 and FGFR4. Affinity between fibroblast growth factors (FGFs) and their receptors is increased by heparan sulfate glycosaminoglycans that function as coreceptors.

It is found in the secreted. Functionally, plays an important role in the regulation of embryonic development, cell proliferation, and cell differentiation. Required for normal limb and cardiac valve development during embryogenesis. May play a role in embryonic molar tooth bud development via inducing the expression of MSX1, MSX2 and MSX1-mediated expression of SDC1 in dental mesenchyme cells. This is Fibroblast growth factor 4 from Bos taurus (Bovine).